A 517-amino-acid chain; its full sequence is Putative thymidine phosphorylase (517 aa).

It belongs to the thymidine/pyrimidine-nucleoside phosphorylase family. Type 2 subfamily.

The enzyme catalyses thymidine + phosphate = 2-deoxy-alpha-D-ribose 1-phosphate + thymine. The polypeptide is Putative thymidine phosphorylase (Legionella pneumophila subsp. pneumophila (strain Philadelphia 1 / ATCC 33152 / DSM 7513)).